The primary structure comprises 429 residues: Nocturnin (429 aa).

Residues 1–73 (MYQSPRRLCS…SMGNGTSRLY (73 aa)) constitute a mitochondrion transit peptide. The disordered stretch occupies residues 21-68 (RRTLVPGPRRTLAPPVLGSRPKSPQLQAAAASGAARSRPRTVSSMGNG). Mg(2+) is bound at residue glutamate 193. Residues glutamate 193, 217–219 (KPW), asparagine 261, 284–287 (HLKA), and 322–324 (DFN) contribute to the substrate site. An interaction with PPARG region spans residues 341–351 (NLNSAYKLLSP). Histidine 412 provides a ligand contact to substrate.

This sequence belongs to the CCR4/nocturin family. As to quaternary structure, interacts with PPARG. Requires Mg(2+) as cofactor. Highly expressed in the differentiated adipocyte (at protein level). Ubiquitous.

The protein resides in the cytoplasm. The protein localises to the nucleus. It is found in the perinuclear region. Its subcellular location is the mitochondrion. It catalyses the reaction NADP(+) + H2O = phosphate + NAD(+). It carries out the reaction NADPH + H2O = phosphate + NADH. Functionally, phosphatase which catalyzes the conversion of NADP(+) to NAD(+) and of NADPH to NADH. Shows a small preference for NADPH over NADP(+). Represses translation and promotes degradation of target mRNA molecules. Plays an important role in post-transcriptional regulation of metabolic genes under circadian control. Exerts a rhythmic post-transcriptional control of genes necessary for metabolic functions including nutrient absorption, glucose/insulin sensitivity, lipid metabolism, adipogenesis, inflammation and osteogenesis. Plays an important role in favoring adipogenesis over osteoblastogenesis and acts as a key regulator of the adipogenesis/osteogenesis balance. Promotes adipogenesis by facilitating PPARG nuclear translocation which activates its transcriptional activity. Regulates circadian expression of NOS2 in the liver and negatively regulates the circadian expression of IGF1 in the bone. Critical for proper development of early embryos. The protein is Nocturnin of Mus musculus (Mouse).